The following is a 163-amino-acid chain: Shikimate kinase (163 aa).

Residue 10-15 participates in ATP binding; sequence GVGKTT. A Mg(2+)-binding site is contributed by T14. Substrate-binding residues include D28, R52, and G75. Residue R116 participates in ATP binding. Substrate is bound at residue R134. R151 contacts ATP.

Belongs to the shikimate kinase family. In terms of assembly, monomer. The cofactor is Mg(2+).

The protein resides in the cytoplasm. It catalyses the reaction shikimate + ATP = 3-phosphoshikimate + ADP + H(+). Its pathway is metabolic intermediate biosynthesis; chorismate biosynthesis; chorismate from D-erythrose 4-phosphate and phosphoenolpyruvate: step 5/7. Its function is as follows. Catalyzes the specific phosphorylation of the 3-hydroxyl group of shikimic acid using ATP as a cosubstrate. The chain is Shikimate kinase from Streptococcus pyogenes serotype M4 (strain MGAS10750).